The primary structure comprises 138 residues: Nucleoside diphosphate kinase (138 aa).

ATP contacts are provided by K10, F58, R86, T92, R103, and N113. The active-site Pros-phosphohistidine intermediate is H116.

It belongs to the NDK family. Homotetramer. The cofactor is Mg(2+).

The protein resides in the cytoplasm. The enzyme catalyses a 2'-deoxyribonucleoside 5'-diphosphate + ATP = a 2'-deoxyribonucleoside 5'-triphosphate + ADP. The catalysed reaction is a ribonucleoside 5'-diphosphate + ATP = a ribonucleoside 5'-triphosphate + ADP. Its function is as follows. Major role in the synthesis of nucleoside triphosphates other than ATP. The ATP gamma phosphate is transferred to the NDP beta phosphate via a ping-pong mechanism, using a phosphorylated active-site intermediate. This is Nucleoside diphosphate kinase from Glaesserella parasuis serovar 5 (strain SH0165) (Haemophilus parasuis).